Consider the following 774-residue polypeptide: MEAEQRPAAGASEGATPGLEAVPPVAPPPATAASGPIPKSGPEPKRRHLGTLLQPTVNKFSLRVFGSHKAVEIEQERVKSAGAWIIHPYSDFRFYWDLIMLLLMVGNLIVLPVGITFFKEENSPPWIVFNVLSDTFFLLDLVLNFRTGIVVEEGAEILLAPRAIRTRYLRTWFLVDLISSIPVDYIFLVVELEPRLDAEVYKTARALRIVRFTKILSLLRLLRLSRLIRYIHQWEEIFHMTYDLASAVVRIFNLIGMMLLLCHWDGCLQFLVPMLQDFPPDCWVSINHMVNHSWGRQYSHALFKAMSHMLCIGYGQQAPVGMPDVWLTMLSMIVGATCYAMFIGHATALIQSLDSSRRQYQEKYKQVEQYMSFHKLPADTRQRIHEYYEHRYQGKMFDEESILGELSEPLREEIINFTCRGLVAHMPLFAHADPSFVTAVLTKLRFEVFQPGDLVVREGSVGRKMYFIQHGLLSVLARGARDTRLTDGSYFGEICLLTRGRRTASVRADTYCRLYSLSVDHFNAVLEEFPMMRRAFETVAMDRLLRIGKKNSILQRKRSEPSPGSSGGIMEQHLVQHDRDMARGVRGRAPSTGAQLSGKPVLWEPLVHAPLQAAAVTSNVAIALTHQRGPLPLSPDSPATLLARSAWRSAGSPASPLVPVRAGPWASTSRLPAPPARTLHASLSRAGRSQVSLLGPPPGGGGRRLGPRGRPLSASQPSLPQRATGDGSPGRKGSGSERLPPSGLLAKPPRTAQPPRPPVPEPATPRGLQLSANM.

The segment at 1–48 is disordered; sequence MEAEQRPAAGASEGATPGLEAVPPVAPPPATAASGPIPKSGPEPKRRH. The Cytoplasmic segment spans residues 1 to 97; it reads MEAEQRPAAG…PYSDFRFYWD (97 aa). The interval 46 to 91 is involved in subunit assembly; sequence RRHLGTLLQPTVNKFSLRVFGSHKAVEIEQERVKSAGAWIIHPYSD. A helical transmembrane segment spans residues 98–118; it reads LIMLLLMVGNLIVLPVGITFF. Residues 119–124 are Extracellular-facing; that stretch reads KEENSP. Residues 125-145 traverse the membrane as a helical segment; that stretch reads PWIVFNVLSDTFFLLDLVLNF. At 146–171 the chain is on the cytoplasmic side; the sequence is RTGIVVEEGAEILLAPRAIRTRYLRT. A helical transmembrane segment spans residues 172–192; the sequence is WFLVDLISSIPVDYIFLVVEL. Residues 193–201 lie on the Extracellular side of the membrane; that stretch reads EPRLDAEVY. The helical; Voltage-sensor transmembrane segment at 202 to 222 threads the bilayer; that stretch reads KTARALRIVRFTKILSLLRLL. Topologically, residues 223–253 are cytoplasmic; that stretch reads RLSRLIRYIHQWEEIFHMTYDLASAVVRIFN. A helical transmembrane segment spans residues 254-274; the sequence is LIGMMLLLCHWDGCLQFLVPM. The Extracellular segment spans residues 275-297; that stretch reads LQDFPPDCWVSINHMVNHSWGRQ. An N-linked (GlcNAc...) asparagine glycan is attached at N291. The pore-forming intramembrane region spans 298–319; it reads YSHALFKAMSHMLCIGYGQQAP. Topologically, residues 320–329 are extracellular; that stretch reads VGMPDVWLTM. A helical transmembrane segment spans residues 330–350; it reads LSMIVGATCYAMFIGHATALI. Residues 351–774 are Cytoplasmic-facing; sequence QSLDSSRRQY…PRGLQLSANM (424 aa). The tract at residues 354–774 is interaction with KCTD3; that stretch reads DSSRRQYQEK…PRGLQLSANM (421 aa). Residues G492, E493, C495, R502, T503, R543, and R546 each contribute to the 3',5'-cyclic AMP site. A Phosphoserine modification is found at S634. The disordered stretch occupies residues 682–774; that stretch reads SLSRAGRSQV…PRGLQLSANM (93 aa). Positions 751-763 are enriched in pro residues; sequence TAQPPRPPVPEPA.

Belongs to the potassium channel HCN family. Homotetramer. The potassium channel is composed of a homo- or heterotetrameric complex of pore-forming subunits. Interacts with HCN11. Interacts with KCTD3; this interaction increases cell surface expression and current density of this channel. Interacts with PEX5L. Detected in brain.

Its subcellular location is the cell membrane. It catalyses the reaction K(+)(in) = K(+)(out). The enzyme catalyses Na(+)(in) = Na(+)(out). Its activity is regulated as follows. Unlike HCN2 and HCN4, HCN3 is insensitive to cyclic nucleotides, such as cAMP or cGMP. This lack of sensitivity of HCN3, despite harboring a functional cyclic nucleotide-binding domain (CNBD), may be explained by its shorter C-terminal sequence, which may alter the normal autoinhibition of the channel. Inhibited by Cs(1+) and ZD7288. Phosphatidylinositol-4,5-bisphosphate (PIP(2)) shifts HCN3 activation to more depolarized potentials and accelerated activation kinetics. Hyperpolarization-activated ion channel that are permeable to sodium and potassium ions, with an about 3:1 preference for potassium ions. Contributes to the native pacemaker currents in heart (If) and in neurons (Ih). In particular, plays a pivotal role in maintaining excitability and promoting rhythmic burst firing within hypothalamic nuclei. Exerts a significant influence on the configuration of the cardiac action potential waveform. Does not appear to play a prominent role in the processing of acute, neuropathic, or inflammatory pain. The polypeptide is Potassium/sodium hyperpolarization-activated cyclic nucleotide-gated channel 3 (HCN3) (Homo sapiens (Human)).